Here is a 430-residue protein sequence, read N- to C-terminus: UDP-N-acetylglucosamine 1-carboxyvinyltransferase (430 aa).

Phosphoenolpyruvate is bound at residue 22–23 (KN). Position 102 (Arg102) interacts with UDP-N-acetyl-alpha-D-glucosamine. The active-site Proton donor is Cys126. A 2-(S-cysteinyl)pyruvic acid O-phosphothioketal modification is found at Cys126. UDP-N-acetyl-alpha-D-glucosamine-binding positions include 131 to 135 (RPVDL), 172 to 175 (KVSV), Asp317, and Ile339.

The protein belongs to the EPSP synthase family. MurA subfamily.

The protein resides in the cytoplasm. The enzyme catalyses phosphoenolpyruvate + UDP-N-acetyl-alpha-D-glucosamine = UDP-N-acetyl-3-O-(1-carboxyvinyl)-alpha-D-glucosamine + phosphate. The protein operates within cell wall biogenesis; peptidoglycan biosynthesis. In terms of biological role, cell wall formation. Adds enolpyruvyl to UDP-N-acetylglucosamine. This is UDP-N-acetylglucosamine 1-carboxyvinyltransferase from Allorhizobium ampelinum (strain ATCC BAA-846 / DSM 112012 / S4) (Agrobacterium vitis (strain S4)).